Reading from the N-terminus, the 410-residue chain is Chitin deacetylase 3 (410 aa).

A signal peptide spans 1 to 18 (MYGHLSLSTLSLLAVVAA). Positions 19–39 (APFPESWLQPRDSDVSQLFRR) are excised as a propeptide. Asparagine 61 and asparagine 80 each carry an N-linked (GlcNAc...) asparagine glycan. One can recognise a NodB homology domain in the interval 124–314 (KVWALSFDDG…KAVANGWSVK (191 aa)). Aspartate 131 (proton acceptor) is an active-site residue. Aspartate 131 contributes to the acetate binding site. Residue aspartate 132 participates in Co(2+) binding. Asparagine 149 carries an N-linked (GlcNAc...) asparagine glycan. Residues histidine 183 and histidine 187 each contribute to the Co(2+) site. An acetate-binding site is contributed by tyrosine 225. An N-linked (GlcNAc...) asparagine glycan is attached at asparagine 279. Catalysis depends on histidine 289, which acts as the Proton donor. N-linked (GlcNAc...) asparagine glycosylation is present at asparagine 293. Serine 385 carries the GPI-anchor amidated serine lipid modification. The propeptide at 386-410 (SSWPIANRPSLFVIACGLALAAIMV) is removed in mature form.

The protein belongs to the polysaccharide deacetylase family. Co(2+) is required as a cofactor.

It localises to the cell membrane. It carries out the reaction [(1-&gt;4)-N-acetyl-beta-D-glucosaminyl](n) + n H2O = chitosan + n acetate. Its function is as follows. Hydrolyzes the N-acetamido groups of N-acetyl-D-glucosamine residues in chitin to form chitosan and acetate. Chitosan is required to anchor melanin to the cell wall, for maintenance of cell wall integrity, and for proper cytokinesis. Chitosan offers an advantage during infection as it is less readily detected than chitin by host immunosurveillance mechanisms. This is Chitin deacetylase 3 from Cryptococcus neoformans var. neoformans serotype D (strain JEC21 / ATCC MYA-565) (Filobasidiella neoformans).